The chain runs to 301 residues: Recombination-associated protein RdgC (301 aa).

This sequence belongs to the RdgC family.

It is found in the cytoplasm. The protein resides in the nucleoid. May be involved in recombination. The sequence is that of Recombination-associated protein RdgC from Xanthomonas axonopodis pv. citri (strain 306).